A 266-amino-acid chain; its full sequence is DNA damage-regulated autophagy modulator protein 2 (266 aa).

Helical transmembrane passes span 8–28 (LSFL…FSYI), 53–73 (KCLF…TIYV), 88–108 (IIKL…GLSI), 118–138 (FAAH…YMFV), 160–180 (LLLV…SSVL), and 207–227 (ITTA…LTYI).

It belongs to the DRAM/TMEM150 family. Expression is down-regulated in ovarian tumors (at protein level). Widely expressed with highest levels in placenta and heart. Expressed in the retina. Not detected in brain or thymus.

It localises to the lysosome membrane. The protein resides in the photoreceptor inner segment. The protein localises to the apical cell membrane. Plays a role in the initiation of autophagy. In the retina, might be involved in the process of photoreceptor cells renewal and recycling to preserve visual function. Induces apoptotic cell death when coexpressed with DRAM1. In Homo sapiens (Human), this protein is DNA damage-regulated autophagy modulator protein 2 (DRAM2).